A 664-amino-acid polypeptide reads, in one-letter code: DNA mismatch repair protein MutL (664 aa).

The segment at 382-447 is disordered; the sequence is RKAGQEQQLQ…YGEPAPSKQQ (66 aa). Positions 427 to 436 are enriched in polar residues; sequence RHTTSSNQSE.

This sequence belongs to the DNA mismatch repair MutL/HexB family.

Functionally, this protein is involved in the repair of mismatches in DNA. It is required for dam-dependent methyl-directed DNA mismatch repair. May act as a 'molecular matchmaker', a protein that promotes the formation of a stable complex between two or more DNA-binding proteins in an ATP-dependent manner without itself being part of a final effector complex. The sequence is that of DNA mismatch repair protein MutL from Vibrio vulnificus (strain YJ016).